Here is a 308-residue protein sequence, read N- to C-terminus: Transaldolase (308 aa).

Catalysis depends on K125, which acts as the Schiff-base intermediate with substrate.

It belongs to the transaldolase family. Type 1 subfamily. In terms of assembly, homodimer.

The protein localises to the cytoplasm. The catalysed reaction is D-sedoheptulose 7-phosphate + D-glyceraldehyde 3-phosphate = D-erythrose 4-phosphate + beta-D-fructose 6-phosphate. It participates in carbohydrate degradation; pentose phosphate pathway; D-glyceraldehyde 3-phosphate and beta-D-fructose 6-phosphate from D-ribose 5-phosphate and D-xylulose 5-phosphate (non-oxidative stage): step 2/3. Functionally, transaldolase is important for the balance of metabolites in the pentose-phosphate pathway. This Pseudomonas entomophila (strain L48) protein is Transaldolase.